A 366-amino-acid chain; its full sequence is Peptide chain release factor 2 (366 aa).

Gln-251 carries the post-translational modification N5-methylglutamine.

This sequence belongs to the prokaryotic/mitochondrial release factor family. Methylated by PrmC. Methylation increases the termination efficiency of RF2.

The protein localises to the cytoplasm. Peptide chain release factor 2 directs the termination of translation in response to the peptide chain termination codons UGA and UAA. This Listeria monocytogenes serovar 1/2a (strain ATCC BAA-679 / EGD-e) protein is Peptide chain release factor 2 (prfB).